Consider the following 341-residue polypeptide: Aspartate carbamoyltransferase catalytic subunit (341 aa).

Carbamoyl phosphate is bound by residues R89 and T90. Residue K117 coordinates L-aspartate. Positions 139, 169, and 172 each coordinate carbamoyl phosphate. Residues R202 and R257 each coordinate L-aspartate. Residues G298 and P299 each contribute to the carbamoyl phosphate site.

It belongs to the aspartate/ornithine carbamoyltransferase superfamily. ATCase family. In terms of assembly, heterododecamer (2C3:3R2) of six catalytic PyrB chains organized as two trimers (C3), and six regulatory PyrI chains organized as three dimers (R2).

The catalysed reaction is carbamoyl phosphate + L-aspartate = N-carbamoyl-L-aspartate + phosphate + H(+). It functions in the pathway pyrimidine metabolism; UMP biosynthesis via de novo pathway; (S)-dihydroorotate from bicarbonate: step 2/3. Catalyzes the condensation of carbamoyl phosphate and aspartate to form carbamoyl aspartate and inorganic phosphate, the committed step in the de novo pyrimidine nucleotide biosynthesis pathway. In Paraburkholderia phytofirmans (strain DSM 17436 / LMG 22146 / PsJN) (Burkholderia phytofirmans), this protein is Aspartate carbamoyltransferase catalytic subunit.